Here is a 194-residue protein sequence, read N- to C-terminus: Large ribosomal subunit protein uL22 (194 aa).

This sequence belongs to the universal ribosomal protein uL22 family.

The chain is Large ribosomal subunit protein uL22 (rpl17) from Aspergillus fumigatus (strain ATCC MYA-4609 / CBS 101355 / FGSC A1100 / Af293) (Neosartorya fumigata).